Consider the following 413-residue polypeptide: Alpha-1-antitrypsin-like protein CM55-ST (413 aa).

Residues 1-24 (MPSSISWGLLLLAALSCLGPGSLA) form the signal peptide. Position 25 is a pyrrolidone carboxylic acid (Q25). 4 N-linked (GlcNAc...) asparagine glycosylation sites follow: N65, N102, N165, and N266. The RCL stretch occupies residues 368 to 387 (GGTVLGNIRSTLRYEVIFDR).

It belongs to the serpin family. In terms of tissue distribution, expressed in liver.

This is Alpha-1-antitrypsin-like protein CM55-ST from Tamias sibiricus (Siberian chipmunk).